A 198-amino-acid polypeptide reads, in one-letter code: NAD(P)H dehydrogenase (quinone) (198 aa).

The Flavodoxin-like domain occupies 4–190 (VLVLYYSAYG…EGAKYQGAHV (187 aa)). FMN is bound by residues 10 to 15 (SAYGHI) and 78 to 80 (TRF). Y12 serves as a coordination point for NAD(+). Substrate is bound at residue W98. Residues 113-119 (SSATQHG) and H134 contribute to the FMN site.

This sequence belongs to the WrbA family. FMN is required as a cofactor.

The catalysed reaction is a quinone + NADH + H(+) = a quinol + NAD(+). It catalyses the reaction a quinone + NADPH + H(+) = a quinol + NADP(+). The protein is NAD(P)H dehydrogenase (quinone) of Rhizobium johnstonii (strain DSM 114642 / LMG 32736 / 3841) (Rhizobium leguminosarum bv. viciae).